The primary structure comprises 191 residues: uncharacterized protein (191 aa).

Residues 52-112 (NKQENQTESS…TNKDTNIETN (61 aa)) are disordered. Residues 57–70 (QTESSDLNNTDSLV) show a composition bias toward polar residues. The span at 71–94 (DSNSDNQTNTTDTSTNNVENLNEN) shows a compositional bias: low complexity. A coiled-coil region spans residues 138 to 172 (QDKISDTERIRFLEEKVSKLERKIRTLSLQMTKIS).

This is an uncharacterized protein from Acanthamoeba polyphaga mimivirus (APMV).